Reading from the N-terminus, the 465-residue chain is ATP-dependent protease ATPase subunit HslU (465 aa).

Residues valine 19 and 61-66 (GVGKTE) contribute to the ATP site. The segment at 153–175 (LFQSDGSDGDDETTEQDSHDEIR) is disordered. Positions 279, 343, and 415 each coordinate ATP.

Belongs to the ClpX chaperone family. HslU subfamily. A double ring-shaped homohexamer of HslV is capped on each side by a ring-shaped HslU homohexamer. The assembly of the HslU/HslV complex is dependent on binding of ATP.

It is found in the cytoplasm. ATPase subunit of a proteasome-like degradation complex; this subunit has chaperone activity. The binding of ATP and its subsequent hydrolysis by HslU are essential for unfolding of protein substrates subsequently hydrolyzed by HslV. HslU recognizes the N-terminal part of its protein substrates and unfolds these before they are guided to HslV for hydrolysis. This chain is ATP-dependent protease ATPase subunit HslU, found in Oceanobacillus iheyensis (strain DSM 14371 / CIP 107618 / JCM 11309 / KCTC 3954 / HTE831).